A 603-amino-acid chain; its full sequence is MAISSASLISSFSHAETFTKHSKIDTVNTQNPILLISKCNSLRELMQIQAYAIKSHIEDVSFVAKLINFCTESPTESSMSYARHLFEAMSEPDIVIFNSMARGYSRFTNPLEVFSLFVEILEDGILPDNYTFPSLLKACAVAKALEEGRQLHCLSMKLGLDDNVYVCPTLINMYTECEDVDSARCVFDRIVEPCVVCYNAMITGYARRNRPNEALSLFREMQGKYLKPNEITLLSVLSSCALLGSLDLGKWIHKYAKKHSFCKYVKVNTALIDMFAKCGSLDDAVSIFEKMRYKDTQAWSAMIVAYANHGKAEKSMLMFERMRSENVQPDEITFLGLLNACSHTGRVEEGRKYFSQMVSKFGIVPSIKHYGSMVDLLSRAGNLEDAYEFIDKLPISPTPMLWRILLAACSSHNNLDLAEKVSERIFELDDSHGGDYVILSNLYARNKKWEYVDSLRKVMKDRKAVKVPGCSSIEVNNVVHEFFSGDGVKSATTKLHRALDEMVKELKLSGYVPDTSMVVHANMNDQEKEITLRYHSEKLAITFGLLNTPPGTTIRVVKNLRVCRDCHNAAKLISLIFGRKVVLRDVQRFHHFEDGKCSCGDFW.

Residues 1-38 (MAISSASLISSFSHAETFTKHSKIDTVNTQNPILLISK) constitute a chloroplast transit peptide. 10 PPR repeats span residues 93–127 (DIVI…GILP), 128–162 (DNYT…GLDD), 163–193 (NVYV…IVEP), 194–228 (CVVC…YLKP), 229–263 (NEIT…SFCK), 264–294 (YVKV…MRYK), 295–329 (DTQA…NVQP), 330–365 (DEIT…GIVP), 366–400 (SIKH…PTPM), and 432–466 (HGGD…KAVK). Positions 401–476 (LWRILLAACS…VPGCSSIEVN (76 aa)) are type E motif. The interval 477–507 (NVVHEFFSGDGVKSATTKLHRALDEMVKELK) is type E(+) motif. A type DYW motif region spans residues 508–603 (LSGYVPDTSM…DGKCSCGDFW (96 aa)).

The protein belongs to the PPR family. PCMP-H subfamily.

It localises to the plastid. The protein resides in the chloroplast. Its function is as follows. Involved in RNA editing event in chloroplasts. Required for the editing of a single site in ndhD transcript, which is a plastid-encoded subunits of the chloroplast NAD(P)H dehydrogenase (NDH) complex. Not essential for the activity of the NDH complex of the photosynthetic electron transport chain. The chain is Pentatricopeptide repeat-containing protein At2g02980, chloroplastic (PCMP-H26) from Arabidopsis thaliana (Mouse-ear cress).